The following is a 367-amino-acid chain: Peptide chain release factor 2 (367 aa).

Gln254 is subject to N5-methylglutamine.

This sequence belongs to the prokaryotic/mitochondrial release factor family. In terms of processing, methylated by PrmC. Methylation increases the termination efficiency of RF2.

The protein resides in the cytoplasm. Functionally, peptide chain release factor 2 directs the termination of translation in response to the peptide chain termination codons UGA and UAA. This chain is Peptide chain release factor 2, found in Variovorax paradoxus (strain S110).